We begin with the raw amino-acid sequence, 236 residues long: Uridylate kinase (236 aa).

Residue 10-13 (KLSG) participates in ATP binding. Position 52 (Gly-52) interacts with UMP. Positions 53 and 57 each coordinate ATP. UMP is bound by residues Asp-72 and 133–140 (TGNPFFTT). The ATP site is built by Thr-160, Tyr-166, and Asp-169.

Belongs to the UMP kinase family. Homohexamer.

It is found in the cytoplasm. It catalyses the reaction UMP + ATP = UDP + ADP. It participates in pyrimidine metabolism; CTP biosynthesis via de novo pathway; UDP from UMP (UMPK route): step 1/1. Its activity is regulated as follows. Inhibited by UTP. Catalyzes the reversible phosphorylation of UMP to UDP. The sequence is that of Uridylate kinase from Polaromonas naphthalenivorans (strain CJ2).